A 746-amino-acid chain; its full sequence is Protein zyg-11 homolog (746 aa).

LRR repeat units lie at residues 185–209, 216–241, and 265–289; these read LPRL…GLRS, MHQL…VLQH, and LPQL…AFVE.

It belongs to the zyg-11 family.

Its function is as follows. Serves as substrate adapter subunit in an E3 ubiquitin ligase complex zyg11-cul2-elongin BC. Targets substrates bearing N-terminal glycine degrons for proteasomal degradation. This chain is Protein zyg-11 homolog (zyg11), found in Danio rerio (Zebrafish).